The primary structure comprises 410 residues: Bifunctional enzyme IspD/IspF (410 aa).

Positions methionine 1–leucine 257 are 2-C-methyl-D-erythritol 4-phosphate cytidylyltransferase. The segment at arginine 258 to leucine 410 is 2-C-methyl-D-erythritol 2,4-cyclodiphosphate synthase. A divalent metal cation-binding residues include aspartate 264 and histidine 266. 4-CDP-2-C-methyl-D-erythritol 2-phosphate is bound by residues aspartate 264–histidine 266 and histidine 290–serine 291. Histidine 298 serves as a coordination point for a divalent metal cation. Residues aspartate 312–glycine 314, threonine 385–aspartate 388, phenylalanine 392, and arginine 395 contribute to the 4-CDP-2-C-methyl-D-erythritol 2-phosphate site.

In the N-terminal section; belongs to the IspD/TarI cytidylyltransferase family. IspD subfamily. It in the C-terminal section; belongs to the IspF family. Requires a divalent metal cation as cofactor.

It carries out the reaction 2-C-methyl-D-erythritol 4-phosphate + CTP + H(+) = 4-CDP-2-C-methyl-D-erythritol + diphosphate. The catalysed reaction is 4-CDP-2-C-methyl-D-erythritol 2-phosphate = 2-C-methyl-D-erythritol 2,4-cyclic diphosphate + CMP. The protein operates within isoprenoid biosynthesis; isopentenyl diphosphate biosynthesis via DXP pathway; isopentenyl diphosphate from 1-deoxy-D-xylulose 5-phosphate: step 2/6. It functions in the pathway isoprenoid biosynthesis; isopentenyl diphosphate biosynthesis via DXP pathway; isopentenyl diphosphate from 1-deoxy-D-xylulose 5-phosphate: step 4/6. Its function is as follows. Bifunctional enzyme that catalyzes the formation of 4-diphosphocytidyl-2-C-methyl-D-erythritol from CTP and 2-C-methyl-D-erythritol 4-phosphate (MEP) (IspD), and catalyzes the conversion of 4-diphosphocytidyl-2-C-methyl-D-erythritol 2-phosphate (CDP-ME2P) to 2-C-methyl-D-erythritol 2,4-cyclodiphosphate (ME-CPP) with a corresponding release of cytidine 5-monophosphate (CMP) (IspF). The chain is Bifunctional enzyme IspD/IspF from Clavibacter michiganensis subsp. michiganensis (strain NCPPB 382).